A 603-amino-acid polypeptide reads, in one-letter code: DNA mismatch repair protein MutL (603 aa).

The protein belongs to the DNA mismatch repair MutL/HexB family.

In terms of biological role, this protein is involved in the repair of mismatches in DNA. It is required for dam-dependent methyl-directed DNA mismatch repair. May act as a 'molecular matchmaker', a protein that promotes the formation of a stable complex between two or more DNA-binding proteins in an ATP-dependent manner without itself being part of a final effector complex. This Listeria monocytogenes serotype 4a (strain HCC23) protein is DNA mismatch repair protein MutL.